The following is a 482-amino-acid chain: Complement C1r subcomponent-like protein (482 aa).

The first 43 residues, 1 to 43 (MSGFRGLVPELENSLWSSPTTSCMSKMCWWLLWGILHTCPTQA), serve as a signal peptide directing secretion. The CUB domain maps to 44 to 166 (SVLLAQQSPQ…KGFLALYQAV (123 aa)). 2 disulfides stabilise this stretch: Cys97-Cys115 and Cys190-Cys223. The region spanning 166 to 225 (VAVNQPNGDTEAVTTPGAPKIQNHCQDPYYKADQTGTLSCPSSWKWKDRQDGGEVPECVP) is the Sushi domain. One can recognise a Peptidase S1 domain in the interval 240–479 (TFGSSRAKLG…YMDWIKRVIE (240 aa)). Catalysis depends on charge relay system residues His278 and Asp334. N-linked (GlcNAc...) asparagine glycosylation is present at Asn358. 2 cysteine pairs are disulfide-bonded: Cys397–Cys416 and Cys427–Cys457. Catalysis depends on Ser431, which acts as the Charge relay system.

It belongs to the peptidase S1 family. In terms of tissue distribution, expressed in liver (at protein level).

It localises to the secreted. Mediates the proteolytic cleavage of HP/haptoglobin in the endoplasmic reticulum. The polypeptide is Complement C1r subcomponent-like protein (C1rl) (Mus musculus (Mouse)).